The sequence spans 343 residues: DNA polymerase III subunit delta (343 aa).

Domain regions lie at residues 1 to 140 (MIRL…VTCQ), 141 to 210 (TPEQ…NDAA), and 211 to 343 (HFTP…FIDG).

It belongs to the DNA polymerase HolA subunit family. As to quaternary structure, the DNA polymerase III holoenzyme complex contains at least 10 different subunits organized into 3 functionally essential subassemblies: the Pol III core, the beta sliding clamp processivity factor and the clamp-loading complex. The Pol III core (subunits alpha, epsilon and theta) contains the polymerase and the 3'-5' exonuclease proofreading activities. The polymerase is tethered to the template via the dimeric beta sliding clamp processivity factor. The clamp-loading complex (also called gamma complex) assembles the beta sliding clamp onto the primed template and plays a central role in the organization and communication at the replication fork. The clamp-loading complex contains delta, delta', psi and chi, and 3 copies of either or both of two different DnaX proteins, gamma and tau. The DNA replisome complex has a single clamp loader (3 tau and 1 each of delta, delta', psi and chi subunits) which binds 3 Pol III cores (1 core on the leading strand and 2 on the lagging strand) each with a beta sliding clamp dimer. Additional proteins in the replisome are other copies of gamma, psi and chi, Ssb, DNA helicase and RNA primase. The clamp loader hydrolyzes ATP to assemble the beta processivity factor onto the primed template and plays a central role in the organization and communication at the replication fork; the minimal complex to load the beta sliding clamp on DNA is delta, delta', gamma.

It catalyses the reaction DNA(n) + a 2'-deoxyribonucleoside 5'-triphosphate = DNA(n+1) + diphosphate. Its function is as follows. Part of the beta sliding clamp loading complex, which hydrolyzes ATP to load the beta clamp onto primed DNA to form the DNA replication pre-initiation complex. DNA polymerase III is a complex, multichain enzyme responsible for most of the replicative synthesis in bacteria. This DNA polymerase also exhibits 3'-5' exonuclease activity. The delta subunit is the wrench that will open the beta subunit dimer, which has been modeled to leave a gap large enough for ssDNA to pass through. The gamma complex (gamma(3),delta,delta') is thought to load beta dimers onto DNA by binding ATP which alters the complex's conformation so it can bind beta sliding clamp dimers and open them at one interface. Primed DNA is recognized, ATP is hydrolyzed releasing the gamma complex and closing the beta sliding clamp ring around the primed DNA. The sequence is that of DNA polymerase III subunit delta (holA) from Escherichia coli (strain K12).